The sequence spans 156 residues: Protein L* (156 aa).

Functionally, may be required for viral persistance in the host. The chain is Protein L* from Theiler's murine encephalomyelitis virus (strain DA) (TMEV).